The sequence spans 70 residues: Peptide BmKn2 (70 aa).

Positions 1-23 (MKSQTFFLLFLVVLLLAISQSEA) are cleaved as a signal peptide. Phenylalanine 36 is modified (phenylalanine amide). Residues 40-70 (SMRDMDTMKYLYDPSLSAADLKTLQKLMENY) constitute a propeptide that is removed on maturation.

It belongs to the non-disulfide-bridged peptide (NDBP) superfamily. Short antimicrobial peptide (group 4) family. In terms of tissue distribution, expressed by the venom gland.

Its subcellular location is the secreted. It is found in the target cell membrane. Its function is as follows. Antimicrobial peptide with potent activity against bacteria. Has strong antibacterial activity against Gram-positive bacteria S.aureus, M.luteus, B.subtilis, and Gram-negative bacteria E.coli, P.aeruginosa and N.gonorrhoeae. Also shows low activity against HIV-1 PV. The sequence is that of Peptide BmKn2 from Olivierus martensii (Manchurian scorpion).